We begin with the raw amino-acid sequence, 778 residues long: Receptor like protein 28 (778 aa).

The first 24 residues, 1–24 (MSGSHLRLRFLSLLLLCCVSSSTS), serve as a signal peptide directing secretion. Residues 25-739 (SLFTFSYPVL…EEQEQVLNWK (715 aa)) are Extracellular-facing. 8 N-linked (GlcNAc...) asparagine glycosylation sites follow: N60, N72, N93, N106, N111, N147, N170, and N173. 5 LRR repeats span residues 99–123 (FHQL…EFGN), 125–147 (NKVE…SFSN), 148–171 (LSQL…VQNL), 172–195 (TNLS…LLMM), and 197–219 (FLSY…TSSK). Residues 220-240 (LEILYLGLKPFEGQILEPISK) form an LRR 6; degenerate repeat. LRR repeat units lie at residues 241-265 (LINL…LFSS), 266-291 (LKSL…LYIP), 293-313 (TLEK…ILKT), 314-338 (LQKL…LWRL), 340-363 (RLRS…VLVN), and 364-387 (SSME…PLSI). Residue N253 is glycosylated (N-linked (GlcNAc...) asparagine). Residues N348 and N363 are each glycosylated (N-linked (GlcNAc...) asparagine). One copy of the LRR 13; degenerate repeat lies at 388 to 407 (KAFSAGYNNFSGEIPLSICN). N396, N407, N420, N431, and N476 each carry an N-linked (GlcNAc...) asparagine glycan. LRR repeat units follow at residues 408 to 429 (RSSL…PQCL), 430 to 453 (SNLT…LCAG), 455 to 477 (SLQT…LLNC), 479 to 500 (SLEF…WLKA), 501 to 525 (LPNL…HQSP), 528 to 552 (FPEL…YFVN), 601 to 625 (LNSY…IGLL), 626 to 649 (KELI…LANA), 650 to 673 (TELE…LKTL), and 678 to 700 (YINV…SSFE). N-linked (GlcNAc...) asparagine glycans are attached at residues N632 and N648. Residue N680 is glycosylated (N-linked (GlcNAc...) asparagine). Residues 740–760 (AVATGYGTGLLLGLAIAQVIA) form a helical membrane-spanning segment. At 761-778 (SYKPDWLVKIIGLFRFCF) the chain is on the cytoplasmic side.

This sequence belongs to the RLP family.

The protein resides in the cell membrane. The sequence is that of Receptor like protein 28 from Arabidopsis thaliana (Mouse-ear cress).